A 187-amino-acid chain; its full sequence is Elongation factor P (187 aa).

This sequence belongs to the elongation factor P family.

It is found in the cytoplasm. It functions in the pathway protein biosynthesis; polypeptide chain elongation. In terms of biological role, involved in peptide bond synthesis. Stimulates efficient translation and peptide-bond synthesis on native or reconstituted 70S ribosomes in vitro. Probably functions indirectly by altering the affinity of the ribosome for aminoacyl-tRNA, thus increasing their reactivity as acceptors for peptidyl transferase. The polypeptide is Elongation factor P (Ruegeria pomeroyi (strain ATCC 700808 / DSM 15171 / DSS-3) (Silicibacter pomeroyi)).